Reading from the N-terminus, the 294-residue chain is S-adenosylmethionine uptake transporter (294 aa).

10 consecutive transmembrane segments (helical) span residues 8 to 28 (YLTGIGWFLLSLVSSSANDVI), 41 to 61 (VAFFRFFFSSIVLLPFVVYYG), 74 to 91 (ILRGLLLFFGMTSWTYGL), 98 to 118 (TATVVSFSIPLFTLILAVFFL), 121 to 141 (NIIWPRWVVTVVGFIGLVVTL), 148 to 168 (FNPEILYFVLAAISFAMLDII), 177 to 197 (SMISMLFYSAIVTAIVSLPVA), 207 to 227 (FELALLFVLGSSGSLILFFLL), 237 to 257 (ATAPYRYLELVISVIAAYFIF), and 260 to 280 (FPDKSTLHGAVIIIPTTLFII). 2 consecutive EamA domains span residues 21 to 141 (SSSA…VVTL) and 160 to 280 (ISFA…LFII).

The protein belongs to the drug/metabolite transporter (DMT) superfamily. 10 TMS drug/metabolite exporter (DME) (TC 2.A.7.3) family.

The protein localises to the cell inner membrane. Transports S-adenosylmethionine. The sequence is that of S-adenosylmethionine uptake transporter (sam) from Rickettsia conorii (strain ATCC VR-613 / Malish 7).